We begin with the raw amino-acid sequence, 856 residues long: Subtilisin-like protease SBT2.2 (856 aa).

The signal sequence occupies residues 1–21 (MRRVLMVNFGVLLLFCFGVLS). Residues 22–159 (NSFGQDNGGD…IVLDFSVRTA (138 aa)) constitute a propeptide, activation peptide. 2 N-linked (GlcNAc...) asparagine glycosylation sites follow: asparagine 35 and asparagine 85. An Inhibitor I9 domain is found at 40–159 (VYIVTLRQAS…IVLDFSVRTA (120 aa)). The 546-residue stretch at 164–709 (PQFMGLPKGA…NGFVNATAAL (546 aa)) folds into the Peptidase S8 domain. Catalysis depends on aspartate 193, which acts as the Charge relay system. N-linked (GlcNAc...) asparagine glycans are attached at residues asparagine 204 and asparagine 255. Histidine 269 functions as the Charge relay system in the catalytic mechanism. Residues asparagine 412, asparagine 441, asparagine 495, asparagine 540, and asparagine 568 are each glycosylated (N-linked (GlcNAc...) asparagine). One can recognise a PA domain in the interval 432-528 (MISALDALKN…MDMPGIIIPS (97 aa)). Serine 634 serves as the catalytic Charge relay system. 7 N-linked (GlcNAc...) asparagine glycosylation sites follow: asparagine 704, asparagine 730, asparagine 738, asparagine 748, asparagine 767, asparagine 782, and asparagine 823.

Belongs to the peptidase S8 family.

The protein resides in the secreted. This chain is Subtilisin-like protease SBT2.2, found in Arabidopsis thaliana (Mouse-ear cress).